A 431-amino-acid chain; its full sequence is Histidinol dehydrogenase (431 aa).

Tyr127, Gln189, and Asn212 together coordinate NAD(+). Positions 237, 259, and 262 each coordinate substrate. Positions 259 and 262 each coordinate Zn(2+). Active-site proton acceptor residues include Glu326 and His327. Substrate-binding residues include His327, Asp360, Glu414, and His419. A Zn(2+)-binding site is contributed by Asp360. His419 serves as a coordination point for Zn(2+).

This sequence belongs to the histidinol dehydrogenase family. Requires Zn(2+) as cofactor.

The enzyme catalyses L-histidinol + 2 NAD(+) + H2O = L-histidine + 2 NADH + 3 H(+). It functions in the pathway amino-acid biosynthesis; L-histidine biosynthesis; L-histidine from 5-phospho-alpha-D-ribose 1-diphosphate: step 9/9. Catalyzes the sequential NAD-dependent oxidations of L-histidinol to L-histidinaldehyde and then to L-histidine. The polypeptide is Histidinol dehydrogenase (Xanthomonas oryzae pv. oryzae (strain KACC10331 / KXO85)).